We begin with the raw amino-acid sequence, 238 residues long: uncharacterized protein (238 aa).

This sequence to M.thermoautotrophicum MTH564.

This is an uncharacterized protein from Methanocaldococcus jannaschii (strain ATCC 43067 / DSM 2661 / JAL-1 / JCM 10045 / NBRC 100440) (Methanococcus jannaschii).